Reading from the N-terminus, the 227-residue chain is MAHPVQLGLQDATSPVMEELITFHDQALMAMFLISFLILYALSSTLTTKLTNTNITDAQEMETIWTILPAVILILIALPSLRILYMTDEINNPSFTIKSIGHQWYWTYEYTDYGGLIFNSYMLPPLFLNPGDLRLLEVDNRVVLPIEAPVRMMITSQDVLHSWTIPTLGLKTDAVPGRLNQTVFTATRPGVYYGQCSEICGANHSFMPIVAELIPLKIFEMGPVFTL.

Topologically, residues 1–14 are mitochondrial intermembrane; sequence MAHPVQLGLQDATS. Residues 15–45 form a helical membrane-spanning segment; it reads PVMEELITFHDQALMAMFLISFLILYALSST. The Mitochondrial matrix portion of the chain corresponds to 46–59; it reads LTTKLTNTNITDAQ. A helical transmembrane segment spans residues 60–87; that stretch reads EMETIWTILPAVILILIALPSLRILYMT. Topologically, residues 88–227 are mitochondrial intermembrane; it reads DEINNPSFTI…IFEMGPVFTL (140 aa). H161, C196, E198, C200, H204, and M207 together coordinate Cu cation. E198 lines the Mg(2+) pocket.

Belongs to the cytochrome c oxidase subunit 2 family. As to quaternary structure, component of the cytochrome c oxidase (complex IV, CIV), a multisubunit enzyme composed of 14 subunits. The complex is composed of a catalytic core of 3 subunits MT-CO1, MT-CO2 and MT-CO3, encoded in the mitochondrial DNA, and 11 supernumerary subunits COX4I, COX5A, COX5B, COX6A, COX6B, COX6C, COX7A, COX7B, COX7C, COX8 and NDUFA4, which are encoded in the nuclear genome. The complex exists as a monomer or a dimer and forms supercomplexes (SCs) in the inner mitochondrial membrane with NADH-ubiquinone oxidoreductase (complex I, CI) and ubiquinol-cytochrome c oxidoreductase (cytochrome b-c1 complex, complex III, CIII), resulting in different assemblies (supercomplex SCI(1)III(2)IV(1) and megacomplex MCI(2)III(2)IV(2)). Found in a complex with TMEM177, COA6, COX18, COX20, SCO1 and SCO2. Interacts with TMEM177 in a COX20-dependent manner. Interacts with COX20. Interacts with COX16. Requires Cu cation as cofactor.

Its subcellular location is the mitochondrion inner membrane. It carries out the reaction 4 Fe(II)-[cytochrome c] + O2 + 8 H(+)(in) = 4 Fe(III)-[cytochrome c] + 2 H2O + 4 H(+)(out). Its function is as follows. Component of the cytochrome c oxidase, the last enzyme in the mitochondrial electron transport chain which drives oxidative phosphorylation. The respiratory chain contains 3 multisubunit complexes succinate dehydrogenase (complex II, CII), ubiquinol-cytochrome c oxidoreductase (cytochrome b-c1 complex, complex III, CIII) and cytochrome c oxidase (complex IV, CIV), that cooperate to transfer electrons derived from NADH and succinate to molecular oxygen, creating an electrochemical gradient over the inner membrane that drives transmembrane transport and the ATP synthase. Cytochrome c oxidase is the component of the respiratory chain that catalyzes the reduction of oxygen to water. Electrons originating from reduced cytochrome c in the intermembrane space (IMS) are transferred via the dinuclear copper A center (CU(A)) of subunit 2 and heme A of subunit 1 to the active site in subunit 1, a binuclear center (BNC) formed by heme A3 and copper B (CU(B)). The BNC reduces molecular oxygen to 2 water molecules using 4 electrons from cytochrome c in the IMS and 4 protons from the mitochondrial matrix. This Papio anubis (Olive baboon) protein is Cytochrome c oxidase subunit 2 (MT-CO2).